A 345-amino-acid polypeptide reads, in one-letter code: MPSFTSKTLLAALAGAAAVNAHGHVKNVVVNGASFQGYDINSFPYTQNPPKVAAWTASNTDNGFVGPESFASSDIICHKNSANAQGRIVVAAGDSVFVQWDTWPESHHGPVIDYLASCGNTGCDKIEKTALEFFKIAEAGLVNGAQAPGRWASDVLIDNNNSWMIKIPANIRPGQYVLRHEIIALHSGGDLNGAQNYPQCFNIEVTGSGTVLPQGVKGTSLYTPTDAGIRFNIYRSLDSYPIPGPALPAGFAPVAQGSSAIVSSATAITGAATNAPAPIATTTAVNVVPSPTTIVTSVVQTSAAQTSAVQTAVPVQTSTRPISTRPQPTRCPGLGRRHLRKVARA.

The signal sequence occupies residues 1–21 (MPSFTSKTLLAALAGAAAVNA). Cu(2+)-binding residues include His22 and His107. Cysteines 77 and 200 form a disulfide. Asn160 carries an N-linked (GlcNAc...) asparagine glycan. O2 contacts are provided by His186 and Gln195. Tyr197 is a binding site for Cu(2+). Residues 315–345 (VQTSTRPISTRPQPTRCPGLGRRHLRKVARA) are disordered. Residues 318-327 (STRPISTRPQ) are compositionally biased toward polar residues. The span at 335–345 (GRRHLRKVARA) shows a compositional bias: basic residues.

It belongs to the polysaccharide monooxygenase AA9 family. Cu(2+) serves as cofactor.

It localises to the secreted. The enzyme catalyses [(1-&gt;4)-beta-D-glucosyl]n+m + reduced acceptor + O2 = 4-dehydro-beta-D-glucosyl-[(1-&gt;4)-beta-D-glucosyl]n-1 + [(1-&gt;4)-beta-D-glucosyl]m + acceptor + H2O.. Its function is as follows. Lytic polysaccharide monooxygenase (LPMO) that depolymerizes crystalline and amorphous polysaccharides via the oxidation of scissile alpha- or beta-(1-4)-glycosidic bonds, yielding C1 or C4 oxidation products. Catalysis by LPMOs requires the reduction of the active-site copper from Cu(II) to Cu(I) by a reducing agent and H(2)O(2) or O(2) as a cosubstrate. The sequence is that of AA9 family lytic polysaccharide monooxygenase D from Podospora anserina (strain S / ATCC MYA-4624 / DSM 980 / FGSC 10383) (Pleurage anserina).